Here is a 310-residue protein sequence, read N- to C-terminus: Small ribosomal subunit biogenesis GTPase RsgA (310 aa).

The 160-residue stretch at 77 to 236 folds into the CP-type G domain; that stretch reads KNELKRPNIA…IADTPGFSKL (160 aa). GTP contacts are provided by residues 126-129 and 179-187; these read SKID and GQTGVGKST. Zn(2+) is bound by residues Cys-260, Cys-266, His-268, and Cys-274.

It belongs to the TRAFAC class YlqF/YawG GTPase family. RsgA subfamily. Monomer. Associates with 30S ribosomal subunit, binds 16S rRNA. It depends on Zn(2+) as a cofactor.

It is found in the cytoplasm. Its function is as follows. One of several proteins that assist in the late maturation steps of the functional core of the 30S ribosomal subunit. Helps release RbfA from mature subunits. May play a role in the assembly of ribosomal proteins into the subunit. Circularly permuted GTPase that catalyzes slow GTP hydrolysis, GTPase activity is stimulated by the 30S ribosomal subunit. This is Small ribosomal subunit biogenesis GTPase RsgA from Phytoplasma australiense.